The following is a 142-amino-acid chain: Dynein light chain Tctex-type protein 2B (142 aa).

This sequence belongs to the dynein light chain Tctex-type family. As to quaternary structure, light chain of the cytoplasmic dynein complex 2, a multisubunit complex composed at least of eleven different proteins. The cytoplasmic dynein 2 complex consists of two catalytic heavy chains (HCs) and a number of non-catalytic subunits presented by intermediate chains (ICs), light intermediate chains (LICs) and light chains (LCs). Among them, a heavy chain (DYNC2H1), two intermediate chains (DYNC2I2 and DYNC2I1), a light intermediate chain (DYNC2LI1), and a light chain (DYNLT2B) are unique to the dynein-2 complex, but a subset of the light chains are also shared by dynein-1 and dynein-2 complexes. Interacts with DYNC2I1. The dimer DYNLT2B-DYNLT1/DYNLT3 interacts with DYNC2I1; this interaction is crucial for retrograde trafficking of ciliary proteins.

The protein localises to the dynein axonemal particle. Functionally, acts as one of several non-catalytic accessory components of the cytoplasmic dynein 2 complex (dynein-2 complex), a motor protein complex that drives the movement of cargos along microtubules within cilia and flagella in concert with the intraflagellar transport (IFT) system. Required for proper retrograde ciliary transport. The chain is Dynein light chain Tctex-type protein 2B from Homo sapiens (Human).